The following is a 299-amino-acid chain: tRNA pseudouridine synthase A (299 aa).

Aspartate 67 acts as the Nucleophile in catalysis. Tyrosine 125 is a substrate binding site.

This sequence belongs to the tRNA pseudouridine synthase TruA family. As to quaternary structure, homodimer.

It catalyses the reaction uridine(38/39/40) in tRNA = pseudouridine(38/39/40) in tRNA. Its function is as follows. Formation of pseudouridine at positions 38, 39 and 40 in the anticodon stem and loop of transfer RNAs. The protein is tRNA pseudouridine synthase A of Parasynechococcus marenigrum (strain WH8102).